Reading from the N-terminus, the 199-residue chain is Putative acetyltransferase SAV2555 (199 aa).

It belongs to the transferase hexapeptide repeat family.

This Staphylococcus aureus (strain Mu50 / ATCC 700699) protein is Putative acetyltransferase SAV2555.